Reading from the N-terminus, the 833-residue chain is Glycerol-3-phosphate acyltransferase (833 aa).

Residues 310–315 (HRSHID) carry the HXXXXD motif motif.

It belongs to the GPAT/DAPAT family.

The protein localises to the cell inner membrane. The enzyme catalyses sn-glycerol 3-phosphate + an acyl-CoA = a 1-acyl-sn-glycero-3-phosphate + CoA. Its pathway is phospholipid metabolism; CDP-diacylglycerol biosynthesis; CDP-diacylglycerol from sn-glycerol 3-phosphate: step 1/3. In Pseudomonas syringae pv. tomato (strain ATCC BAA-871 / DC3000), this protein is Glycerol-3-phosphate acyltransferase.